Reading from the N-terminus, the 200-residue chain is ATP-dependent Clp protease proteolytic subunit (200 aa).

S103 serves as the catalytic Nucleophile. H128 is an active-site residue.

The protein belongs to the peptidase S14 family. In terms of assembly, fourteen ClpP subunits assemble into 2 heptameric rings which stack back to back to give a disk-like structure with a central cavity, resembling the structure of eukaryotic proteasomes.

Its subcellular location is the cytoplasm. It carries out the reaction Hydrolysis of proteins to small peptides in the presence of ATP and magnesium. alpha-casein is the usual test substrate. In the absence of ATP, only oligopeptides shorter than five residues are hydrolyzed (such as succinyl-Leu-Tyr-|-NHMec, and Leu-Tyr-Leu-|-Tyr-Trp, in which cleavage of the -Tyr-|-Leu- and -Tyr-|-Trp bonds also occurs).. Cleaves peptides in various proteins in a process that requires ATP hydrolysis. Has a chymotrypsin-like activity. Plays a major role in the degradation of misfolded proteins. The sequence is that of ATP-dependent Clp protease proteolytic subunit from Vibrio parahaemolyticus serotype O3:K6 (strain RIMD 2210633).